The sequence spans 837 residues: Protein translocase subunit SecA (837 aa).

ATP-binding positions include Gln-85, 103–107 (GEGKT), and Asp-493. Cys-821, Cys-823, Cys-832, and His-833 together coordinate Zn(2+).

This sequence belongs to the SecA family. As to quaternary structure, monomer and homodimer. Part of the essential Sec protein translocation apparatus which comprises SecA, SecYEG and auxiliary proteins SecDF. Other proteins may also be involved. The cofactor is Zn(2+).

The protein localises to the cell membrane. It is found in the cytoplasm. The enzyme catalyses ATP + H2O + cellular proteinSide 1 = ADP + phosphate + cellular proteinSide 2.. Part of the Sec protein translocase complex. Interacts with the SecYEG preprotein conducting channel. Has a central role in coupling the hydrolysis of ATP to the transfer of proteins into and across the cell membrane, serving as an ATP-driven molecular motor driving the stepwise translocation of polypeptide chains across the membrane. This Streptococcus pneumoniae (strain ATCC BAA-255 / R6) protein is Protein translocase subunit SecA.